We begin with the raw amino-acid sequence, 424 residues long: Inhibin beta A chain (424 aa).

Residues 1 to 20 (MPLLWLRGFLLASCWIIVRS) form the signal peptide. A propeptide spanning residues 21–308 (SPTPGSEGPG…EDHPHRRRRR (288 aa)) is cleaved from the precursor. N-linked (GlcNAc...) asparagine glycosylation occurs at Asn165. Residues 257 to 288 (KKKKKEEEGEGKKKDGGDGGAGADEDKEQSHR) are disordered. Over residues 261-273 (KEEEGEGKKKDGG) the composition is skewed to basic and acidic residues. Intrachain disulfides connect Cys312–Cys320, Cys319–Cys389, Cys348–Cys421, and Cys352–Cys423.

The protein belongs to the TGF-beta family. Dimeric, linked by one or more disulfide bonds. Inhibin A is a dimer of alpha/INHA and beta-A/INHBA. Activin A is a homodimer of beta-A/INHBA. Activin AB is a dimer of beta-A/INHBA and beta-B/INHBB. Interacts with FST and FSTL3; these interactions prevent activin A interaction to its type II receptor. Activin A interacts with ACVR2A. Activin A interacts with BMPR2. Inhibin A interacts with ACVR1; this interaction creates a non-signaling complex (NSC) that inhibits ACVR1-mediated BMP signaling. Inhibin A interacts with ACVR2A.

It localises to the secreted. Inhibins/activins are involved in regulating a number of diverse functions such as hypothalamic and pituitary hormone secretion, gonadal hormone secretion, germ cell development and maturation, erythroid differentiation, insulin secretion, nerve cell survival, embryonic axial development or bone growth, depending on their subunit composition. Functionally, activin A is a homodimer of INHBA that plays a role in several essential biological processes including embryonic development, stem cell maintenance and differentiation, haematopoiesis, cell proliferation and tissue fibrosis. Signals through type I (such as ACVR1B or ACVR1C) and type II receptors (such as ACVR2A, ACVR2B or BMPR2) which, upon ligand binding, phosphorylate SMAD2 and SMAD3 intracellular signaling mediators that form a complex with SMAD4, translocate to the nucleus and modulate gene expression. Can also activate alternative non-canonical intracellular signaling pathways including the p38 MAPK, extracellular signal-regulated kinases 1/2 (ERK1/2) and c-Jun N-terminal kinases (JNKs) to modulate cell migration and differentiation. Alternatively, promotes osteoblastic differentiation via ACVRL1-SMAD1/5/9 pathway. In addition, can engage the type I receptor ACVR1 to form an ACVR1-activin A-type II receptor non-signaling complex (NSC) that renders receptors unavailable for engagement with BMPs, hence resulting in an apparent inhibition of ACVR1-mediated BMP signaling. In terms of biological role, inhibin A is a dimer of alpha/INHA and beta-A/INHBA that functions as a feedback regulator in the hypothalamic-pituitary-gonadal (HPG) axis. Inhibits the secretion of FSH from the anterior pituitary gland by acting on pituitary gonadotrope cells. Antagonizes activin A by binding to the proteoglycan, betaglycan, and forming a stable complex with and, thereby, sequestering type II activin receptors while excluding type I receptor. This Felis catus (Cat) protein is Inhibin beta A chain (INHBA).